Consider the following 208-residue polypeptide: N-(5'-phosphoribosyl)anthranilate isomerase (208 aa).

It belongs to the TrpF family.

It carries out the reaction N-(5-phospho-beta-D-ribosyl)anthranilate = 1-(2-carboxyphenylamino)-1-deoxy-D-ribulose 5-phosphate. It participates in amino-acid biosynthesis; L-tryptophan biosynthesis; L-tryptophan from chorismate: step 3/5. This chain is N-(5'-phosphoribosyl)anthranilate isomerase, found in Chlamydia trachomatis serovar L2 (strain ATCC VR-902B / DSM 19102 / 434/Bu).